A 358-amino-acid polypeptide reads, in one-letter code: 3-isopropylmalate dehydrogenase (358 aa).

Positions 92, 102, 130, and 224 each coordinate substrate. Mg(2+) is bound by residues aspartate 224, aspartate 248, and aspartate 252. Residue 282-294 (GSAPDIAGQGIAN) coordinates NAD(+).

It belongs to the isocitrate and isopropylmalate dehydrogenases family. LeuB type 1 subfamily. Homodimer. Mg(2+) serves as cofactor. The cofactor is Mn(2+).

It localises to the cytoplasm. It catalyses the reaction (2R,3S)-3-isopropylmalate + NAD(+) = 4-methyl-2-oxopentanoate + CO2 + NADH. The protein operates within amino-acid biosynthesis; L-leucine biosynthesis; L-leucine from 3-methyl-2-oxobutanoate: step 3/4. Functionally, catalyzes the oxidation of 3-carboxy-2-hydroxy-4-methylpentanoate (3-isopropylmalate) to 3-carboxy-4-methyl-2-oxopentanoate. The product decarboxylates to 4-methyl-2 oxopentanoate. The sequence is that of 3-isopropylmalate dehydrogenase from Bordetella avium (strain 197N).